We begin with the raw amino-acid sequence, 191 residues long: Adenine phosphoribosyltransferase (191 aa).

The protein belongs to the purine/pyrimidine phosphoribosyltransferase family. In terms of assembly, homodimer.

Its subcellular location is the cytoplasm. It catalyses the reaction AMP + diphosphate = 5-phospho-alpha-D-ribose 1-diphosphate + adenine. The protein operates within purine metabolism; AMP biosynthesis via salvage pathway; AMP from adenine: step 1/1. In terms of biological role, catalyzes a salvage reaction resulting in the formation of AMP, that is energically less costly than de novo synthesis. This chain is Adenine phosphoribosyltransferase, found in Nocardia farcinica (strain IFM 10152).